A 488-amino-acid chain; its full sequence is Bifunctional pantoate ligase/cytidylate kinase (488 aa).

1 to 8 (MGALHRAH) serves as a coordination point for ATP. A pantoate--beta-alanine ligase region spans residues 1–251 (MGALHRAHGQ…CGETRLIDHT (251 aa)). Catalysis depends on His8, which acts as the Proton donor. Gln36 lines the (R)-pantoate pocket. Gln36 contributes to the beta-alanine binding site. 125–128 (GEKD) serves as a coordination point for ATP. Gln131 provides a ligand contact to (R)-pantoate. Residues Val154 and 162-165 (CSSR) each bind ATP. The tract at residues 252–488 (FLMSRQPIVA…PEEVWPTPGS (237 aa)) is cytidylate kinase.

In the N-terminal section; belongs to the pantothenate synthetase family. It in the C-terminal section; belongs to the cytidylate kinase family. Type 1 subfamily.

It is found in the cytoplasm. The catalysed reaction is (R)-pantoate + beta-alanine + ATP = (R)-pantothenate + AMP + diphosphate + H(+). It catalyses the reaction CMP + ATP = CDP + ADP. It carries out the reaction dCMP + ATP = dCDP + ADP. It functions in the pathway cofactor biosynthesis; (R)-pantothenate biosynthesis; (R)-pantothenate from (R)-pantoate and beta-alanine: step 1/1. Its function is as follows. Catalyzes the condensation of pantoate with beta-alanine in an ATP-dependent reaction via a pantoyl-adenylate intermediate. Functionally, catalyzes the transfer of a phosphate group from ATP to either CMP or dCMP to form CDP or dCDP and ADP, respectively. The sequence is that of Bifunctional pantoate ligase/cytidylate kinase from Prochlorococcus marinus (strain MIT 9303).